We begin with the raw amino-acid sequence, 153 residues long: Large ribosomal subunit protein uL22 (153 aa).

The interval 125–153 (EPKEARQARKKAKSGRPAAAAKSETEKGA) is disordered.

It belongs to the universal ribosomal protein uL22 family. Part of the 50S ribosomal subunit.

Functionally, this protein binds specifically to 23S rRNA; its binding is stimulated by other ribosomal proteins, e.g. L4, L17, and L20. It is important during the early stages of 50S assembly. It makes multiple contacts with different domains of the 23S rRNA in the assembled 50S subunit and ribosome. Its function is as follows. The globular domain of the protein is located near the polypeptide exit tunnel on the outside of the subunit, while an extended beta-hairpin is found that lines the wall of the exit tunnel in the center of the 70S ribosome. This is Large ribosomal subunit protein uL22 from Cutibacterium acnes (strain DSM 16379 / KPA171202) (Propionibacterium acnes).